The sequence spans 195 residues: Thymidine kinase (195 aa).

ATP contacts are provided by residues Gly15–Ser22 and Asp88–Gln91. Glu89 acts as the Proton acceptor in catalysis. The Zn(2+) site is built by Cys145, Cys148, Cys183, and Cys186.

The protein belongs to the thymidine kinase family. In terms of assembly, homotetramer.

The protein resides in the cytoplasm. It catalyses the reaction thymidine + ATP = dTMP + ADP + H(+). This chain is Thymidine kinase, found in Bacillus cereus (strain ZK / E33L).